A 217-amino-acid polypeptide reads, in one-letter code: Protein 33K (217 aa).

The disordered stretch occupies residues 1-142 (MPPKGNKQAI…KEKTSAIATR (142 aa)). Acidic residues predominate over residues 24-68 (QWDEEEESWDDSQAEEVSDEEEMESWESLDEELEDKPPKDEEEEI). Positions 69–78 (IASAAAPSSK) are enriched in low complexity. Positions 123 to 136 (KRSEKTTRPRKEKT) are enriched in basic and acidic residues. The interval 160-187 (YAIFQQSRGQQLELKVKNRSLRSLTRSC) is necessary for nuclear subcellular location. Positions 166-186 (SRGQQLELKVKNRSLRSLTRS) are RS-repeat; required for splicing enhancer activity.

This sequence belongs to the adenoviridae splicing factor family. Homooligomer. Interacts with DBP; this interaction occurs at a unique vertex during genome packaging. Interacts with IVa2; this interaction occurs at a unique vertex during genome packaging and seems to potentiate IVa2 and 33K oligomerization. Post-translationally, phosphorylated in vitro by human PKA and PRKDC. PRKDC inhibits, whereas PKA activates the splicing factor.

It localises to the host nucleus. Its function is as follows. Promotes alternative splicing of late transcripts by promoting splicing at weak 3' splice sites. Required for the temporal activation of major late pre-mRNA splicing at late times of infection. Induces the splicing and expression of the late capsid vertex protein. In terms of biological role, probably functions as the small terminase that is part of the molecular motor that translocates genomic DNA in empty capsid during DNA packaging. This motor is located at a unique vertex and comprises at least the IVa2 ATPase, the small terminase 33K and probably a portal. Forms a ring-like structure of about 17 nm in which genomic DNA is translocated into the capsid. Stimulates IVa2 ATPase activity in the presence of the viral genome. Once the DNA is packaged, the terminase detaches: the 33K protein is present in the empty particles, but not in the mature virions. Also involved in virion assembly. This is Protein 33K from Human adenovirus F serotype 41 (HAdV-41).